Reading from the N-terminus, the 378-residue chain is Glutamate 5-kinase (378 aa).

Lys-20 contacts ATP. 3 residues coordinate substrate: Ser-60, Asp-147, and Asn-159. ATP contacts are provided by residues 179–180 and 221–227; these read TD and TGGMLTK. Residues 286–364 enclose the PUA domain; the sequence is RGRVVLDDGA…SQIARILGSM (79 aa).

The protein belongs to the glutamate 5-kinase family.

It is found in the cytoplasm. It carries out the reaction L-glutamate + ATP = L-glutamyl 5-phosphate + ADP. The protein operates within amino-acid biosynthesis; L-proline biosynthesis; L-glutamate 5-semialdehyde from L-glutamate: step 1/2. In terms of biological role, catalyzes the transfer of a phosphate group to glutamate to form L-glutamate 5-phosphate. The chain is Glutamate 5-kinase from Bordetella pertussis (strain Tohama I / ATCC BAA-589 / NCTC 13251).